Reading from the N-terminus, the 161-residue chain is Phosphopantetheine adenylyltransferase (161 aa).

Ser-9 is a substrate binding site. ATP-binding positions include 9–10 (SF) and His-17. Lys-41, Thr-74, and Arg-88 together coordinate substrate. ATP is bound by residues 89–91 (GVR), Glu-99, and 124–130 (NSFVASS).

It belongs to the bacterial CoaD family. Homohexamer. Mg(2+) serves as cofactor.

The protein localises to the cytoplasm. The catalysed reaction is (R)-4'-phosphopantetheine + ATP + H(+) = 3'-dephospho-CoA + diphosphate. Its pathway is cofactor biosynthesis; coenzyme A biosynthesis; CoA from (R)-pantothenate: step 4/5. Reversibly transfers an adenylyl group from ATP to 4'-phosphopantetheine, yielding dephospho-CoA (dPCoA) and pyrophosphate. The protein is Phosphopantetheine adenylyltransferase of Lactobacillus acidophilus (strain ATCC 700396 / NCK56 / N2 / NCFM).